A 218-amino-acid polypeptide reads, in one-letter code: Elongation factor Ts (218 aa).

Residues Thr-82 to Val-85 form an involved in Mg(2+) ion dislocation from EF-Tu region.

This sequence belongs to the EF-Ts family.

The protein localises to the cytoplasm. In terms of biological role, associates with the EF-Tu.GDP complex and induces the exchange of GDP to GTP. It remains bound to the aminoacyl-tRNA.EF-Tu.GTP complex up to the GTP hydrolysis stage on the ribosome. This chain is Elongation factor Ts, found in Prochlorococcus marinus (strain AS9601).